The following is a 663-amino-acid chain: Putative ankyrin repeat protein R219 (663 aa).

ANK repeat units follow at residues Phe-91 to Val-118, Asp-119 to Ser-148, Ala-200 to Thr-229, Asp-258 to Pro-288, and Tyr-322 to Val-351.

This is Putative ankyrin repeat protein R219 from Acanthamoeba polyphaga mimivirus (APMV).